Consider the following 363-residue polypeptide: MDVGSADAFDRMGTLGVEEEFFVVDDSGQPTAGIQELIYDYNHPPAGVLADRLDHELFQFVIETQTPLLEDVSAVSESVQAVRDALVTHAADHGYRIAAAGLHPTAKWRERNHVEKPRYQSQLDRIQYPQHRNTTAGLHVHVGVDDPDAATWIANELRWYLPPLLALSANSPYWNGFDTGLASARAKIFEALPNTGMPTRFEDFEAYYQLEKRMVETGSIKDRGELWYDVRPHTGHGTVEVRTPDAQADPSVTVAIVEYIHALVMDFAARYADGESGTKVRREILDANKWHAMRYGRDAEFIIPGSMETVTLSEFVDRETNRLGVDGLTTLLAREGGAKKQRRLHASDNIDTLLESLCLDTDT.

Belongs to the glutamate--cysteine ligase type 2 family. YbdK subfamily.

The catalysed reaction is L-cysteine + L-glutamate + ATP = gamma-L-glutamyl-L-cysteine + ADP + phosphate + H(+). Functionally, catalyzes the synthesis of gamma-glutamylcysteine (gamma-GC), the main low-molecular-weight thiol compound instead of glutathione in halophilic archaea. This chain is Glutamate--cysteine ligase, found in Haloquadratum walsbyi (strain DSM 16790 / HBSQ001).